Here is a 620-residue protein sequence, read N- to C-terminus: 1-deoxy-D-xylulose-5-phosphate synthase (620 aa).

Residues histidine 80 and glycine 121–serine 123 each bind thiamine diphosphate. Aspartate 152 contacts Mg(2+). Thiamine diphosphate-binding positions include glycine 153–alanine 154, asparagine 181, tyrosine 288, and glutamate 370. Asparagine 181 is a binding site for Mg(2+).

The protein belongs to the transketolase family. DXPS subfamily. As to quaternary structure, homodimer. The cofactor is Mg(2+). Thiamine diphosphate is required as a cofactor.

The catalysed reaction is D-glyceraldehyde 3-phosphate + pyruvate + H(+) = 1-deoxy-D-xylulose 5-phosphate + CO2. It participates in metabolic intermediate biosynthesis; 1-deoxy-D-xylulose 5-phosphate biosynthesis; 1-deoxy-D-xylulose 5-phosphate from D-glyceraldehyde 3-phosphate and pyruvate: step 1/1. Catalyzes the acyloin condensation reaction between C atoms 2 and 3 of pyruvate and glyceraldehyde 3-phosphate to yield 1-deoxy-D-xylulose-5-phosphate (DXP). The chain is 1-deoxy-D-xylulose-5-phosphate synthase from Escherichia fergusonii (strain ATCC 35469 / DSM 13698 / CCUG 18766 / IAM 14443 / JCM 21226 / LMG 7866 / NBRC 102419 / NCTC 12128 / CDC 0568-73).